Reading from the N-terminus, the 503-residue chain is Aspartyl/glutamyl-tRNA(Asn/Gln) amidotransferase subunit B (503 aa).

It belongs to the GatB/GatE family. GatB subfamily. In terms of assembly, heterotrimer of A, B and C subunits.

The catalysed reaction is L-glutamyl-tRNA(Gln) + L-glutamine + ATP + H2O = L-glutaminyl-tRNA(Gln) + L-glutamate + ADP + phosphate + H(+). It catalyses the reaction L-aspartyl-tRNA(Asn) + L-glutamine + ATP + H2O = L-asparaginyl-tRNA(Asn) + L-glutamate + ADP + phosphate + 2 H(+). Allows the formation of correctly charged Asn-tRNA(Asn) or Gln-tRNA(Gln) through the transamidation of misacylated Asp-tRNA(Asn) or Glu-tRNA(Gln) in organisms which lack either or both of asparaginyl-tRNA or glutaminyl-tRNA synthetases. The reaction takes place in the presence of glutamine and ATP through an activated phospho-Asp-tRNA(Asn) or phospho-Glu-tRNA(Gln). In Cereibacter sphaeroides (strain KD131 / KCTC 12085) (Rhodobacter sphaeroides), this protein is Aspartyl/glutamyl-tRNA(Asn/Gln) amidotransferase subunit B.